Consider the following 216-residue polypeptide: uncharacterized protein (216 aa).

The next 4 membrane-spanning stretches (helical) occupy residues 5-27, 98-120, 125-147, and 185-207; these read ISLI…IAFS, FLSF…VFLL, VLIW…TFTN, and GTLF…GILG.

It is found in the cell membrane. This is an uncharacterized protein from Aquifex aeolicus (strain VF5).